A 276-amino-acid chain; its full sequence is MVATPDTTADVLTIAGRSFRSRLMTGTGKYRSFEQMRASIAASGCEIVTVAVRRVQTNAPGHEGLAEALDWQKIWMLPNTAGCATAEEAIRVARLGREMAKLLGQEDNNFVKLEVIPDSRYLLPDPIGTLQAAEQLVKEGFAVLPYINADPLLAKRLEEVGCATVMPLGSPIGSGQGIRNEANIRIIVENAKVPVVVDAGIGTASEAAQAMELGADALLINTAIAQAEDPARMAQAMAMATIAGRLAFQAGRIPTRSAAIASSPQTGLVGQSPATV.

The active-site Schiff-base intermediate with DXP is the Lys112. 1-deoxy-D-xylulose 5-phosphate-binding positions include Gly173, 199-200 (AG), and 221-222 (NT).

Belongs to the ThiG family. As to quaternary structure, homotetramer. Forms heterodimers with either ThiH or ThiS.

It localises to the cytoplasm. It catalyses the reaction [ThiS sulfur-carrier protein]-C-terminal-Gly-aminoethanethioate + 2-iminoacetate + 1-deoxy-D-xylulose 5-phosphate = [ThiS sulfur-carrier protein]-C-terminal Gly-Gly + 2-[(2R,5Z)-2-carboxy-4-methylthiazol-5(2H)-ylidene]ethyl phosphate + 2 H2O + H(+). Its pathway is cofactor biosynthesis; thiamine diphosphate biosynthesis. In terms of biological role, catalyzes the rearrangement of 1-deoxy-D-xylulose 5-phosphate (DXP) to produce the thiazole phosphate moiety of thiamine. Sulfur is provided by the thiocarboxylate moiety of the carrier protein ThiS. In vitro, sulfur can be provided by H(2)S. This Synechococcus sp. (strain ATCC 27144 / PCC 6301 / SAUG 1402/1) (Anacystis nidulans) protein is Thiazole synthase.